Here is a 400-residue protein sequence, read N- to C-terminus: Large envelope protein (400 aa).

The residue at position 1 (methionine 1) is an N-acetylmethionine. Glycine 2 carries the N-myristoyl glycine; by host lipid modification. Residues 2–119 (GGWSSKPRKG…PPLRDTHPQA (118 aa)) are pre-S1. Residues 2 to 174 (GGWSSKPRKG…LSKTGDPVPN (173 aa)) are pre-S. At 2-181 (GGWSSKPRKG…VPNMENISSG (180 aa)) the chain is on the virion surface; in external conformation side. Residues 2–253 (GGWSSKPRKG…PGYRWMCLRR (252 aa)) lie on the Intravirion; in internal conformation side of the membrane. N-linked (GlcNAc...) asparagine glycosylation is present at tryptophan 4. 2 disordered regions span residues 29–50 (QLDP…PHKD) and 85–118 (LTTV…THPQ). Over residues 96–106 (STSRQSGRQPT) the composition is skewed to polar residues. Residues 120–174 (MQWNSTTFHQTLQDPRVRALYFPAGGSSSGTVSPAQNTVSAISSTLSKTGDPVPN) are pre-S2. A helical transmembrane segment spans residues 182 to 202 (LLGPLLVLQAGFFLLTKILTI). At 203–253 (PQSLDSWWTSLNFLGQTPVCLGQNSQSQISSHSLTCCPPICPGYRWMCLRR) the chain is on the intravirion; in external conformation side. Residues 254–274 (FIIFLCILLLCLIFLLVLLDC) traverse the membrane as a helical segment. At 275–348 (QGMLPVCPLI…WASVRFSWLS (74 aa)) the chain is on the virion surface side. N-linked (GlcNAc...) asparagine; by host glycosylation is present at asparagine 320. A helical membrane pass occupies residues 349–369 (LLVPFVQWFVGLSPTVWLSVI). Residues 370–375 (WMMWFW) lie on the Intravirion side of the membrane. Residues 376-398 (GPSLCNILSPFMPLLPIFFCLWV) traverse the membrane as a helical segment. Over 399–400 (YI) the chain is Virion surface.

This sequence belongs to the orthohepadnavirus major surface antigen family. Interacts (via its myristoylated pre-S1 region) with the host SLC10A1/NTCP; this interaction is essential for viral entry. As to quaternary structure, in its internal form (Li-HBsAg), interacts with the capsid protein and with the isoform S. Interacts with host chaperone CANX. In terms of assembly, associates with host chaperone CANX through its pre-S2 N glycan; this association may be essential for isoform M proper secretion. Interacts with isoform L. Interacts with the antigens of satellite virus HDV (HDVAgs); this interaction is required for encapsidation of HDV genomic RNA. Isoform M is N-terminally acetylated by host at a ratio of 90%, and N-glycosylated by host at the pre-S2 region. Post-translationally, myristoylated; this modification is essential for its interaction with the host protein SLC10A1/NTCP.

The protein resides in the virion membrane. Functionally, the large envelope protein exists in two topological conformations, one which is termed 'external' or Le-HBsAg and the other 'internal' or Li-HBsAg. In its external conformation the protein attaches the virus to cell receptors and thereby initiating infection. This interaction determines the species specificity and liver tropism. This attachment induces virion internalization predominantly through caveolin-mediated endocytosis. The large envelope protein also assures fusion between virion membrane and endosomal membrane. In its internal conformation the protein plays a role in virion morphogenesis and mediates the contact with the nucleocapsid like a matrix protein. The middle envelope protein plays an important role in the budding of the virion. It is involved in the induction of budding in a nucleocapsid independent way. In this process the majority of envelope proteins bud to form subviral lipoprotein particles of 22 nm of diameter that do not contain a nucleocapsid. The protein is Large envelope protein of Homo sapiens (Human).